The sequence spans 158 residues: NADH-quinone oxidoreductase subunit B 2 (158 aa).

Residues cysteine 37, cysteine 38, cysteine 102, and cysteine 132 each coordinate [4Fe-4S] cluster.

This sequence belongs to the complex I 20 kDa subunit family. As to quaternary structure, NDH-1 is composed of 14 different subunits. Subunits NuoB, C, D, E, F, and G constitute the peripheral sector of the complex. The cofactor is [4Fe-4S] cluster.

It localises to the cell inner membrane. It catalyses the reaction a quinone + NADH + 5 H(+)(in) = a quinol + NAD(+) + 4 H(+)(out). Functionally, NDH-1 shuttles electrons from NADH, via FMN and iron-sulfur (Fe-S) centers, to quinones in the respiratory chain. Couples the redox reaction to proton translocation (for every two electrons transferred, four hydrogen ions are translocated across the cytoplasmic membrane), and thus conserves the redox energy in a proton gradient. The chain is NADH-quinone oxidoreductase subunit B 2 from Nitrosospira multiformis (strain ATCC 25196 / NCIMB 11849 / C 71).